The sequence spans 351 residues: Biotin synthase (351 aa).

In terms of domain architecture, Radical SAM core spans 48-265; sequence NKVRIHILDN…LCMFRLINPD (218 aa). Residues Cys-63, Cys-67, and Cys-70 each coordinate [4Fe-4S] cluster. [2Fe-2S] cluster-binding residues include Cys-107, Cys-139, Cys-199, and Arg-269.

This sequence belongs to the radical SAM superfamily. Biotin synthase family. As to quaternary structure, homodimer. [4Fe-4S] cluster serves as cofactor. Requires [2Fe-2S] cluster as cofactor.

The enzyme catalyses (4R,5S)-dethiobiotin + (sulfur carrier)-SH + 2 reduced [2Fe-2S]-[ferredoxin] + 2 S-adenosyl-L-methionine = (sulfur carrier)-H + biotin + 2 5'-deoxyadenosine + 2 L-methionine + 2 oxidized [2Fe-2S]-[ferredoxin]. The protein operates within cofactor biosynthesis; biotin biosynthesis; biotin from 7,8-diaminononanoate: step 2/2. Functionally, catalyzes the conversion of dethiobiotin (DTB) to biotin by the insertion of a sulfur atom into dethiobiotin via a radical-based mechanism. The chain is Biotin synthase from Leptospira interrogans serogroup Icterohaemorrhagiae serovar copenhageni (strain Fiocruz L1-130).